The sequence spans 276 residues: Putative aliphatic sulfonates transport permease protein SsuC (276 aa).

7 helical membrane passes run 32-52 (GLLL…LGVV), 54-74 (ATVL…ILSG), 87-107 (AALG…LAGF), 119-141 (LQML…FGFD), 146-168 (ILLI…IRGV), 199-219 (ILLG…VAEL), and 242-262 (VFAG…FVRL). The 181-residue stretch at 80–260 (LQISIYRAAL…VVGKLTDSFV (181 aa)) folds into the ABC transmembrane type-1 domain.

It belongs to the binding-protein-dependent transport system permease family. CysTW subfamily.

The protein localises to the cell membrane. Part of a binding-protein-dependent transport system for aliphatic sulfonates. Probably responsible for the translocation of the substrate across the membrane. In Bacillus subtilis (strain 168), this protein is Putative aliphatic sulfonates transport permease protein SsuC (ssuC).